Reading from the N-terminus, the 163-residue chain is NADH-quinone oxidoreductase subunit I (163 aa).

4Fe-4S ferredoxin-type domains are found at residues 54-84 (LRRYPNGEERCIACKLCEAVCPALAISIESD) and 94-123 (TRYDIDLTKCIFCGFCEEACPVDAIVETHI). [4Fe-4S] cluster-binding residues include cysteine 64, cysteine 67, cysteine 70, cysteine 74, cysteine 103, cysteine 106, cysteine 109, and cysteine 113.

This sequence belongs to the complex I 23 kDa subunit family. NDH-1 is composed of 14 different subunits. Subunits NuoA, H, J, K, L, M, N constitute the membrane sector of the complex. It depends on [4Fe-4S] cluster as a cofactor.

Its subcellular location is the cell inner membrane. It carries out the reaction a quinone + NADH + 5 H(+)(in) = a quinol + NAD(+) + 4 H(+)(out). NDH-1 shuttles electrons from NADH, via FMN and iron-sulfur (Fe-S) centers, to quinones in the respiratory chain. The immediate electron acceptor for the enzyme in this species is believed to be ubiquinone. Couples the redox reaction to proton translocation (for every two electrons transferred, four hydrogen ions are translocated across the cytoplasmic membrane), and thus conserves the redox energy in a proton gradient. This chain is NADH-quinone oxidoreductase subunit I, found in Cupriavidus metallidurans (strain ATCC 43123 / DSM 2839 / NBRC 102507 / CH34) (Ralstonia metallidurans).